Reading from the N-terminus, the 427-residue chain is MSVSFENKETNRGVLTFTISQDQIKPELDRVFKSVKKSLNVPGFRKGHLPRPIFDQKFGEEALYQDAMNALLPNAYEAAVKEAGLEVVAQPKIDVTSMEKGQDWVITAEVVTKPEVKLGDYKNLEVSVDVEKEVTDADVEERIERERNNLAELVIKEAAAENGDTVVIDFVGSIDGVEFDGGKGENFSLGLGSGQFIPGFEDQLVGHSAGETVDVIVTFPEDYQAEDLAGKEAKFVTTIHEVKAKEVPALDDELAKDIDEEVETLADLKEKYSKELAAAKEEAYKDAVEGAAIDTAVENAEIVELPEEMIHEEVHRSVNEFLGNLQRQGINPDMYFQITGTTQEDLHNQYQAEAESRTKTNLVIEAVAKAEGFDASEEEIQKEVEQLAADYNMEVAQVQNLLSADMLKHDITIKKAVELITSTATVK.

Residues 163-248 (GDTVVIDFVG…IHEVKAKEVP (86 aa)) form the PPIase FKBP-type domain.

The protein belongs to the FKBP-type PPIase family. Tig subfamily.

Its subcellular location is the cytoplasm. The enzyme catalyses [protein]-peptidylproline (omega=180) = [protein]-peptidylproline (omega=0). Functionally, involved in protein export. Acts as a chaperone by maintaining the newly synthesized protein in an open conformation. Functions as a peptidyl-prolyl cis-trans isomerase. The sequence is that of Trigger factor from Streptococcus pneumoniae serotype 4 (strain ATCC BAA-334 / TIGR4).